The chain runs to 183 residues: Adenylate kinase (183 aa).

7–15 is an ATP binding site; the sequence is GVAGVGKTT.

This sequence belongs to the archaeal adenylate kinase family.

Its subcellular location is the cytoplasm. It catalyses the reaction AMP + ATP = 2 ADP. The chain is Adenylate kinase (adkA) from Thermoplasma acidophilum (strain ATCC 25905 / DSM 1728 / JCM 9062 / NBRC 15155 / AMRC-C165).